A 467-amino-acid chain; its full sequence is DNA polymerase IV (467 aa).

The 183-residue stretch at 5 to 187 (VLHIDMDAFF…LPVGALWGVG (183 aa)) folds into the UmuC domain. Positions 9 and 104 each coordinate Mg(2+). E105 is an active-site residue. Disordered regions lie at residues 364 to 383 (PDTD…STQV) and 429 to 449 (KGRT…DPLD).

This sequence belongs to the DNA polymerase type-Y family. In terms of assembly, monomer. Requires Mg(2+) as cofactor.

The protein localises to the cytoplasm. It carries out the reaction DNA(n) + a 2'-deoxyribonucleoside 5'-triphosphate = DNA(n+1) + diphosphate. In terms of biological role, poorly processive, error-prone DNA polymerase involved in untargeted mutagenesis. Copies undamaged DNA at stalled replication forks, which arise in vivo from mismatched or misaligned primer ends. These misaligned primers can be extended by PolIV. Exhibits no 3'-5' exonuclease (proofreading) activity. May be involved in translesional synthesis, in conjunction with the beta clamp from PolIII. The polypeptide is DNA polymerase IV (Corynebacterium glutamicum (strain ATCC 13032 / DSM 20300 / JCM 1318 / BCRC 11384 / CCUG 27702 / LMG 3730 / NBRC 12168 / NCIMB 10025 / NRRL B-2784 / 534)).